We begin with the raw amino-acid sequence, 337 residues long: Lipopolysaccharide 1,3-galactosyltransferase (337 aa).

Residues 33 to 38 and 130 to 131 contribute to the UDP site; these read GIDKNF and DA. Asp-130 and Asp-132 together coordinate Mg(2+). 2 consecutive short sequence motifs (DXD) follow at residues 130-132 and 219-221; these read DAD and DQD. Mg(2+) is bound at residue His-264. UDP is bound at residue 264-270; the sequence is HYIGPTK.

Belongs to the glycosyltransferase 8 family. It depends on Mg(2+) as a cofactor.

The enzyme catalyses UDP-alpha-D-galactose + [lipopolysaccharide] = UDP + 3-alpha-D-galactosyl-[lipopolysaccharide].. It functions in the pathway bacterial outer membrane biogenesis; LPS core biosynthesis. Its activity is regulated as follows. Inhibited in a competitive manner by closely related nonsubstrate lipopolysaccharides. Galactosyltransferase involved in the biosynthesis of the core oligosaccharide region of lipopolysaccharide (LPS). Catalyzes the addition of an alpha l,3-linked galactose (galactose I) to the first outer-core glucose (glucose I). Cannot use UDP-glucose. Activity probably does not require the branched galactose added by WaaB, but it is higher in the presence of this branched galactose. This chain is Lipopolysaccharide 1,3-galactosyltransferase, found in Salmonella typhimurium (strain LT2 / SGSC1412 / ATCC 700720).